The chain runs to 677 residues: Methionine--tRNA ligase (677 aa).

Positions 15–25 (PYANGSIHLGH) match the 'HIGH' region motif. The Zn(2+) site is built by Cys-146, Cys-149, Cys-159, and Cys-162. A 'KMSKS' region motif is present at residues 333–337 (KMSKS). Lys-336 is a binding site for ATP. The tRNA-binding domain maps to 575–677 (DFAKVDLRVA…AGAKPGHQVK (103 aa)).

Belongs to the class-I aminoacyl-tRNA synthetase family. MetG type 1 subfamily. As to quaternary structure, homodimer. It depends on Zn(2+) as a cofactor.

The protein localises to the cytoplasm. The enzyme catalyses tRNA(Met) + L-methionine + ATP = L-methionyl-tRNA(Met) + AMP + diphosphate. Functionally, is required not only for elongation of protein synthesis but also for the initiation of all mRNA translation through initiator tRNA(fMet) aminoacylation. In Escherichia coli O81 (strain ED1a), this protein is Methionine--tRNA ligase.